The following is a 70-amino-acid chain: Small ribosomal subunit protein bS21C (70 aa).

The disordered stretch occupies residues 38-70; sequence YEKPTTERKRKKAAAVARLRKQVRRSMPPKKKY. Basic residues predominate over residues 45-70; sequence RKRKKAAAVARLRKQVRRSMPPKKKY.

This sequence belongs to the bacterial ribosomal protein bS21 family.

In Burkholderia thailandensis (strain ATCC 700388 / DSM 13276 / CCUG 48851 / CIP 106301 / E264), this protein is Small ribosomal subunit protein bS21C.